Here is a 735-residue protein sequence, read N- to C-terminus: Transcription initiation factor IIF subunit alpha (735 aa).

Disordered regions lie at residues 1–68 (MSRR…EYAE), 165–263 (EYKK…TANL), 297–323 (NEPE…AKRG), 446–465 (KAVA…NSEV), 471–606 (EEFA…HKEP), and 631–674 (PEGE…EETP). The span at 33–54 (RMRMGQNGSNSSSPGVPNGDNS) shows a compositional bias: low complexity. Composition is skewed to basic and acidic residues over residues 59 to 68 (VKKDDPEYAE) and 165 to 174 (EYKKKAEQER). A compositionally biased stretch (polar residues) spans 175–219 (STPNSGGMNKSGTVSLNNTVKDGSQTPTVDSVTKDNTANGVNSSI). At Ser198 the chain carries Phosphoserine. The residue at position 200 (Thr200) is a Phosphothreonine. Low complexity predominate over residues 220–238 (PTVTGSSVPPASPTTVSAV). Polar residues predominate over residues 239–263 (ESNGLSNGSTSAANGLDGNASTANL). Composition is skewed to acidic residues over residues 453 to 465 (AMDE…NSEV) and 471 to 480 (EEFADDEEAP). Residues 487-500 (QENKESEQRIKKEM) are compositionally biased toward basic and acidic residues. Positions 513–522 (APSENEEDEL) are enriched in acidic residues. Ser515 carries the phosphoserine modification. Positions 523–536 (FGEKKIDEDGERIK) are enriched in basic and acidic residues. Ser560, Ser562, and Ser571 each carry phosphoserine. The segment covering 564–583 (IENKENESPVKKEEDSDTLS) has biased composition (basic and acidic residues). The segment covering 584-595 (KSKRSSPKKQQK) has biased composition (basic residues). A compositionally biased stretch (polar residues) spans 636–654 (NPQTTKAVDSSNNASNTVP). A Phosphoserine modification is found at Ser655.

It belongs to the TFIIF alpha subunit family. TFIIF is composed of three different subunits: TFG1/RAP74, TFG2/RAP30 and TAF14. Phosphorylated on Ser and other residues by TAF1 and casein kinase II-like kinases.

It is found in the nucleus. Functionally, TFIIF is a general transcription initiation factor that binds to RNA polymerase II. Its functions include the recruitment of RNA polymerase II to the promoter bound DNA-TBP-TFIIB complex, decreasing the affinity of RNA polymerase II for non-specific DNA, allowing for the subsequent recruitment of TFIIE and TFIIH, and facilitating RNA polymerase II elongation. This Saccharomyces cerevisiae (strain ATCC 204508 / S288c) (Baker's yeast) protein is Transcription initiation factor IIF subunit alpha (TFG1).